We begin with the raw amino-acid sequence, 245 residues long: Orotidine 5'-phosphate decarboxylase (245 aa).

Substrate contacts are provided by residues Asp-22, Lys-44, 71–80, Thr-131, Arg-192, Gln-201, Gly-221, and Arg-222; that span reads DLKFHDIPNT. The active-site Proton donor is the Lys-73.

This sequence belongs to the OMP decarboxylase family. Type 1 subfamily. As to quaternary structure, homodimer.

It carries out the reaction orotidine 5'-phosphate + H(+) = UMP + CO2. Its pathway is pyrimidine metabolism; UMP biosynthesis via de novo pathway; UMP from orotate: step 2/2. Catalyzes the decarboxylation of orotidine 5'-monophosphate (OMP) to uridine 5'-monophosphate (UMP). The protein is Orotidine 5'-phosphate decarboxylase of Escherichia coli O127:H6 (strain E2348/69 / EPEC).